The chain runs to 457 residues: Serine--tRNA ligase (457 aa).

252–254 (TAE) contacts L-serine. Residues 283 to 285 (RKE) and Val299 contribute to the ATP site. Glu306 provides a ligand contact to L-serine. Residue 370-373 (EMVS) coordinates ATP. Thr406 lines the L-serine pocket.

It belongs to the class-II aminoacyl-tRNA synthetase family. Type-1 seryl-tRNA synthetase subfamily. In terms of assembly, homodimer. The tRNA molecule binds across the dimer.

The protein localises to the cytoplasm. The enzyme catalyses tRNA(Ser) + L-serine + ATP = L-seryl-tRNA(Ser) + AMP + diphosphate + H(+). It carries out the reaction tRNA(Sec) + L-serine + ATP = L-seryl-tRNA(Sec) + AMP + diphosphate + H(+). The protein operates within aminoacyl-tRNA biosynthesis; selenocysteinyl-tRNA(Sec) biosynthesis; L-seryl-tRNA(Sec) from L-serine and tRNA(Sec): step 1/1. In terms of biological role, catalyzes the attachment of serine to tRNA(Ser). Is also able to aminoacylate tRNA(Sec) with serine, to form the misacylated tRNA L-seryl-tRNA(Sec), which will be further converted into selenocysteinyl-tRNA(Sec). This chain is Serine--tRNA ligase, found in Saccharolobus solfataricus (strain ATCC 35092 / DSM 1617 / JCM 11322 / P2) (Sulfolobus solfataricus).